The chain runs to 1178 residues: Pyruvate carboxylase, mitochondrial (1178 aa).

A mitochondrion-targeting transit peptide spans 1-20 (MLKFQTVRGGLRLLGVRRSS). Position 21 is a phosphoserine (S21). 2 positions are modified to N6-acetyllysine: K35 and K39. Residues 36-486 (PIKKVMVANR…DTQFIDENPE (451 aa)) enclose the Biotin carboxylation domain. K79 carries the N6-acetyllysine; alternate modification. Residue K79 is modified to N6-succinyllysine; alternate. N6-acetyllysine occurs at positions 148 and 152. ATP is bound by residues K152 and E236. The 198-residue stretch at 156–353 (RAIAIAAGVP…LVHAQIHVSE (198 aa)) folds into the ATP-grasp domain. K241 carries the post-translational modification N6-acetyllysine. Residue H271 coordinates ATP. N6-acetyllysine occurs at positions 297, 316, and 319. Residue R328 is part of the active site. At K434 the chain carries N6-acetyllysine. K442 is modified (N6-succinyllysine). The Pyruvate carboxyltransferase domain maps to 563-832 (LLLMDTTFRD…DTEVPLERVF (270 aa)). Position 571–575 (571–575 (RDAHQ)) interacts with substrate. D572 is a binding site for Mn(2+). At K589 the chain carries N6-acetyllysine. Substrate is bound at residue R644. N6-acetyllysine occurs at positions 661 and 717. K741 contributes to the Mn(2+) binding site. K741 carries the N6-carboxylysine modification. K748 is subject to N6-acetyllysine. Mn(2+)-binding residues include H771 and H773. K892 bears the N6-acetyllysine mark. Substrate is bound at residue T908. K969 is modified (N6-acetyllysine). Position 988 is an N6-acetyllysine; alternate (K988). K988 carries the N6-succinyllysine; alternate modification. The residue at position 992 (K992) is an N6-acetyllysine. T1003 carries the post-translational modification Phosphothreonine. 3 positions are modified to N6-acetyllysine: K1061, K1090, and K1124. A Biotinyl-binding domain is found at 1109–1178 (KGQIGAPMPG…EGDDLILEIE (70 aa)). At K1144 the chain carries N6-biotinyllysine.

Homotetramer. Interacts (via the biotin carboxylation domain) with SIRT4. Biotin serves as cofactor. The cofactor is Mn(2+). Acetylation of Lys-316 is observed in liver mitochondria from fasted mice but not from fed mice. Acetylation of Lys-748 might play a role in catalytic activity regulation. In terms of tissue distribution, liver, kidney, adipose tissue, liver and brain.

Its subcellular location is the mitochondrion matrix. The enzyme catalyses hydrogencarbonate + pyruvate + ATP = oxaloacetate + ADP + phosphate + H(+). It participates in carbohydrate biosynthesis; gluconeogenesis. Its function is as follows. Pyruvate carboxylase catalyzes a 2-step reaction, involving the ATP-dependent carboxylation of the covalently attached biotin in the first step and the transfer of the carboxyl group to pyruvate in the second. Catalyzes in a tissue specific manner, the initial reactions of glucose (liver, kidney) and lipid (adipose tissue, liver, brain) synthesis from pyruvate. This Mus musculus (Mouse) protein is Pyruvate carboxylase, mitochondrial (Pc).